Consider the following 372-residue polypeptide: tRNA-specific 2-thiouridylase MnmA (372 aa).

ATP-binding positions include 11–18 and M36; that span reads GLSGGVDS. Residues 106-108 form an interaction with target base in tRNA region; it reads NPD. C111 functions as the Nucleophile in the catalytic mechanism. C111 and C204 are oxidised to a cystine. ATP is bound at residue G136. An interaction with tRNA region spans residues 154-156; the sequence is KDQ. Residue C204 is the Cysteine persulfide intermediate of the active site. The interaction with tRNA stretch occupies residues 311 to 312; that stretch reads RY.

The protein belongs to the MnmA/TRMU family.

Its subcellular location is the cytoplasm. The enzyme catalyses S-sulfanyl-L-cysteinyl-[protein] + uridine(34) in tRNA + AH2 + ATP = 2-thiouridine(34) in tRNA + L-cysteinyl-[protein] + A + AMP + diphosphate + H(+). Functionally, catalyzes the 2-thiolation of uridine at the wobble position (U34) of tRNA, leading to the formation of s(2)U34. The sequence is that of tRNA-specific 2-thiouridylase MnmA from Mycoplasmopsis synoviae (strain 53) (Mycoplasma synoviae).